The following is a 201-amino-acid chain: Putative manganese efflux pump MntP (201 aa).

Transmembrane regions (helical) follow at residues 6-26 (CLAVAVALAMDAFAVAIATGI), 39-59 (LAFHFGLFQALMPVAGWTLGL), 105-125 (LTLIMLAVATSIDALAVGLSL), 127-147 (VLGIDIVTPAIVIGVVCLLFT), and 169-189 (LAGGVVLIGIGLRILYEHGVF).

The protein belongs to the MntP (TC 9.B.29) family.

It is found in the cell inner membrane. In terms of biological role, probably functions as a manganese efflux pump. The sequence is that of Putative manganese efflux pump MntP from Nitratidesulfovibrio vulgaris (strain ATCC 29579 / DSM 644 / CCUG 34227 / NCIMB 8303 / VKM B-1760 / Hildenborough) (Desulfovibrio vulgaris).